We begin with the raw amino-acid sequence, 394 residues long: Ceramide glucosyltransferase (394 aa).

Topologically, residues 1 to 10 (MAVLDLALQG) are lumenal. A helical membrane pass occupies residues 11–32 (LAIFGCVLFFVLWFMHFLSIVY). Residues 33-195 (TRLHLNKKVS…QVYFGTSHPR (163 aa)) lie on the Cytoplasmic side of the membrane. Residue aspartate 92 is a short sequence motif, D1. A short sequence motif (D2) is located at residue aspartate 144. The helical transmembrane segment at 196–215 (SYISANVTGFKCVTGMSCLM) threads the bilayer. Over 216–287 (RKEVLDQAGG…KLRINMLPAT (72 aa)) the chain is Lumenal. A short sequence motif (D3) is located at residue aspartate 236. Aspartate 236 functions as the Proton acceptor in the catalytic mechanism. Positions 272–276 (RMIRW) match the (Q/R)XXRW motif. A helical membrane pass occupies residues 288-304 (IICEPISECFVASLIIG). The Cytoplasmic segment spans residues 305–309 (WAAHH). The helical transmembrane segment at 310–328 (IFRWDIMVFFMCHCLAWFI) threads the bilayer. The Lumenal segment spans residues 329–348 (FDYIQLRGVQGGPLNFSKLD). A helical membrane pass occupies residues 349-369 (YAVAWFIRESMTIYIFLSALW). Residues 370-394 (DPTISWRTGRYRLRCGGTAEEILDV) are Cytoplasmic-facing.

It belongs to the glycosyltransferase 2 family.

It localises to the golgi apparatus membrane. It catalyses the reaction an N-acylsphing-4-enine + UDP-alpha-D-glucose = a beta-D-glucosyl-(1&lt;-&gt;1')-N-acylsphing-4-enine + UDP + H(+). The enzyme catalyses UDP-alpha-D-xylose + an N-acylsphing-4-enine = a beta-D-xylosyl-(1&lt;-&gt;1')-N-acylsphing-4-enine + UDP + H(+). The catalysed reaction is N-(9Z-octadecenoyl)-sphing-4-enine + UDP-alpha-D-xylose = beta-D-xylosyl-(1&lt;-&gt;1')-N-(9Z-octadecenoyl)-sphing-4-enine + UDP + H(+). It participates in lipid metabolism; sphingolipid metabolism. Functionally, participates in the initial step of the glucosylceramide-based glycosphingolipid/GSL synthetic pathway at the cytosolic surface of the Golgi. Catalyzes the transfer of glucose from UDP-glucose to ceramide to produce glucosylceramide/GlcCer (such as beta-D-glucosyl-(1&lt;-&gt;1')-N-acylsphing-4-enine). Glucosylceramide is the core component of glycosphingolipids/GSLs, amphipathic molecules consisting of a ceramide lipid moiety embedded in the outer leaflet of the membrane, linked to one of hundreds of different externally oriented oligosaccharide structures. Glycosphingolipids are essential components of membrane microdomains that mediate membrane trafficking and signal transduction. They are implicated in many fundamental cellular processes, including growth, differentiation, migration, morphogenesis, cell-to-cell and cell-to-matrix interactions. Catalyzes the synthesis of xylosylceramide/XylCer (such as beta-D-xylosyl-(1&lt;-&gt;1')-N-acylsphing-4-enine) using UDP-Xyl as xylose donor. This is Ceramide glucosyltransferase (ugcg) from Xenopus tropicalis (Western clawed frog).